Consider the following 412-residue polypeptide: Double C2-like domain-containing protein beta (412 aa).

The interval 1 to 36 (MTLRRRGEKATISIQEHMAIDVCPGPIRPIKQISDY) is negatively regulates targeting to plasma membrane. A mediates interaction with DYNLT1 region spans residues 1–90 (MTLRRRGEKA…EDVDQLFGAY (90 aa)). The disordered stretch occupies residues 38-123 (PRFPRGLPPD…PDADGYESDD (86 aa)). Residues 49–70 (GPRAAAPPDAPARPAVAGAGRR) show a composition bias toward low complexity. Over residues 95 to 108 (GPSPGPSPARPPAK) the composition is skewed to pro residues. Residues 112-123 (DEPDADGYESDD) are compositionally biased toward acidic residues. C2 domains lie at 126–250 (ALGT…SICL) and 266–399 (ERGR…ERWH). Residues D157, D163, D218, D220, D297, D303, D357, D359, and D365 each contribute to the Ca(2+) site. Residues 257–375 (DKTEDKSLEE…FIGGVVLGIH (119 aa)) are mediates interaction with STXBP3. A Phosphoserine modification is found at S411.

Interacts with the SNARE (soluble N-ethylmaleimide-sensitive factor attached protein receptor) complex composed of SNAP25, STX1A and VAMP2; the interaction is calcium-dependent and competitive with SYT1. Interacts with STX4; the interaction is calcium-dependent, increased by insulin and glucose, and mediates vesicle fusion with plasma membrane in pancreatic cells and adipocytes. Interacts with STXBP3; the interaction is direct, occurs at the cell membrane and regulates glucose-stimulated insulin secretion. May interact with UNC13A; the interaction mediates targeting to the plasma membrane. Interacts with cytoplasmic dynein light chain DYNLT1. Ca(2+) serves as cofactor. As to expression, widely expressed with highest levels in brain and kidney. Expressed in pancreatic islet cells (at protein level).

Its subcellular location is the cytoplasm. It localises to the cytoplasmic granule. It is found in the cell membrane. Its function is as follows. Calcium sensor which positively regulates SNARE-dependent fusion of vesicles with membranes. Binds phospholipids in a calcium-dependent manner and may act at the priming stage of fusion by modifying membrane curvature to stimulate fusion. Involved in calcium-triggered exocytosis in chromaffin cells and calcium-dependent spontaneous release of neurotransmitter in absence of action potentials in neuronal cells. Involved both in glucose-stimulated insulin secretion in pancreatic cells and insulin-dependent GLUT4 transport to the plasma membrane in adipocytes. In Homo sapiens (Human), this protein is Double C2-like domain-containing protein beta.